The following is a 171-amino-acid chain: Peptide deformylase (171 aa).

Residues Cys-92 and His-134 each contribute to the Fe cation site. Glu-135 is a catalytic residue. His-138 contacts Fe cation.

Belongs to the polypeptide deformylase family. Fe(2+) serves as cofactor.

It carries out the reaction N-terminal N-formyl-L-methionyl-[peptide] + H2O = N-terminal L-methionyl-[peptide] + formate. Its function is as follows. Removes the formyl group from the N-terminal Met of newly synthesized proteins. Requires at least a dipeptide for an efficient rate of reaction. N-terminal L-methionine is a prerequisite for activity but the enzyme has broad specificity at other positions. The protein is Peptide deformylase of Polynucleobacter necessarius subsp. necessarius (strain STIR1).